Reading from the N-terminus, the 705-residue chain is Polyribonucleotide nucleotidyltransferase (705 aa).

Mg(2+) contacts are provided by D486 and D492. One can recognise a KH domain in the interval 553–612 (PRIYKIKINPEKIKDVIGKGGSVIRMLTEKTKSSIEIEDDGTVKVISTDIKNAQCALKKI). Residues 622–690 (NKIYVAKITR…RYGRIRLSFT (69 aa)) form the S1 motif domain.

This sequence belongs to the polyribonucleotide nucleotidyltransferase family. In terms of assembly, component of the RNA degradosome, which is a multiprotein complex involved in RNA processing and mRNA degradation. Requires Mg(2+) as cofactor.

It is found in the cytoplasm. It carries out the reaction RNA(n+1) + phosphate = RNA(n) + a ribonucleoside 5'-diphosphate. In terms of biological role, involved in mRNA degradation. Catalyzes the phosphorolysis of single-stranded polyribonucleotides processively in the 3'- to 5'-direction. This is Polyribonucleotide nucleotidyltransferase from Wigglesworthia glossinidia brevipalpis.